Consider the following 310-residue polypeptide: GMP synthase [glutamine-hydrolyzing] subunit B (310 aa).

The region spanning 2–185 (FKTEPFIEES…LGLPDQIAHR (184 aa)) is the GMPS ATP-PPase domain. 29 to 35 (SGGVDSA) is a binding site for ATP.

Heterodimer composed of a glutamine amidotransferase subunit (A) and a GMP-binding subunit (B).

It carries out the reaction XMP + L-glutamine + ATP + H2O = GMP + L-glutamate + AMP + diphosphate + 2 H(+). The protein operates within purine metabolism; GMP biosynthesis; GMP from XMP (L-Gln route): step 1/1. In terms of biological role, catalyzes the synthesis of GMP from XMP. The polypeptide is GMP synthase [glutamine-hydrolyzing] subunit B (Methanococcus maripaludis (strain DSM 14266 / JCM 13030 / NBRC 101832 / S2 / LL)).